Reading from the N-terminus, the 166-residue chain is Putative 4-hydroxy-4-methyl-2-oxoglutarate aldolase (166 aa).

Residues 74 to 77 (GDQI) and arginine 96 each bind substrate. Aspartate 97 serves as a coordination point for a divalent metal cation.

Belongs to the class II aldolase/RraA-like family. Homotrimer. The cofactor is a divalent metal cation.

It carries out the reaction 4-hydroxy-4-methyl-2-oxoglutarate = 2 pyruvate. The enzyme catalyses oxaloacetate + H(+) = pyruvate + CO2. Catalyzes the aldol cleavage of 4-hydroxy-4-methyl-2-oxoglutarate (HMG) into 2 molecules of pyruvate. Also contains a secondary oxaloacetate (OAA) decarboxylase activity due to the common pyruvate enolate transition state formed following C-C bond cleavage in the retro-aldol and decarboxylation reactions. The chain is Putative 4-hydroxy-4-methyl-2-oxoglutarate aldolase from Xanthomonas oryzae pv. oryzae (strain MAFF 311018).